A 197-amino-acid polypeptide reads, in one-letter code: Putative carbonic anhydrase YvdA (197 aa).

The Zn(2+) site is built by Cys-41, Asp-43, His-99, and Cys-102.

Belongs to the beta-class carbonic anhydrase family. Requires Zn(2+) as cofactor.

The enzyme catalyses hydrogencarbonate + H(+) = CO2 + H2O. Functionally, reversible hydration of carbon dioxide. The chain is Putative carbonic anhydrase YvdA (yvdA) from Bacillus subtilis (strain 168).